Reading from the N-terminus, the 377-residue chain is Chaperone protein DnaJ (377 aa).

Residues 4-69 enclose the J domain; that stretch reads DYYEVLGVSK…EKRARYDQMG (66 aa). The CR-type zinc finger occupies 131 to 213; that stretch reads GTEKEIQVPR…CSGKGTTRKV (83 aa). Zn(2+) is bound by residues C144, C147, C161, C164, C187, C190, C201, and C204. CXXCXGXG motif repeat units follow at residues 144-151, 161-168, 187-194, and 201-208; these read CTECHGSG, CSQCHGTG, CPACNGSG, and CKECSGKG.

This sequence belongs to the DnaJ family. In terms of assembly, homodimer. Zn(2+) is required as a cofactor.

The protein localises to the cytoplasm. In terms of biological role, participates actively in the response to hyperosmotic and heat shock by preventing the aggregation of stress-denatured proteins and by disaggregating proteins, also in an autonomous, DnaK-independent fashion. Unfolded proteins bind initially to DnaJ; upon interaction with the DnaJ-bound protein, DnaK hydrolyzes its bound ATP, resulting in the formation of a stable complex. GrpE releases ADP from DnaK; ATP binding to DnaK triggers the release of the substrate protein, thus completing the reaction cycle. Several rounds of ATP-dependent interactions between DnaJ, DnaK and GrpE are required for fully efficient folding. Also involved, together with DnaK and GrpE, in the DNA replication of plasmids through activation of initiation proteins. The polypeptide is Chaperone protein DnaJ (Desulfitobacterium hafniense (strain DSM 10664 / DCB-2)).